Consider the following 71-residue polypeptide: uncharacterized protein (71 aa).

2 helical membrane passes run 9 to 29 and 41 to 61; these read FVIF…NINF and FVAL…FFGL.

Its subcellular location is the membrane. This is an uncharacterized protein from Acheta domesticus (House cricket).